A 71-amino-acid chain; its full sequence is Large ribosomal subunit protein bL31 (71 aa).

Residues Cys-16, Cys-18, Cys-37, and Cys-40 each coordinate Zn(2+).

It belongs to the bacterial ribosomal protein bL31 family. Type A subfamily. As to quaternary structure, part of the 50S ribosomal subunit. It depends on Zn(2+) as a cofactor.

Its function is as follows. Binds the 23S rRNA. The polypeptide is Large ribosomal subunit protein bL31 (Mannheimia succiniciproducens (strain KCTC 0769BP / MBEL55E)).